The sequence spans 426 residues: PI-PLC X domain-containing protein At5g67130 (426 aa).

The signal sequence occupies residues 1–28 (MSACINGLCRAVTVSLLLLLLSFSFSSA). Residues 76-232 (IINGLPFNKY…MVQENHRLLV (157 aa)) form the PI-PLC X-box domain. Asparagine 151 and asparagine 255 each carry an N-linked (GlcNAc...) asparagine glycan. The segment at 258 to 277 (GDPGVKRGSCPNRKESQPLN) is disordered. N-linked (GlcNAc...) asparagine glycosylation is present at asparagine 370. Serine 404 carries the GPI-anchor amidated serine lipid modification. The propeptide at 405–426 (VAQLNNIVVFCFSLLPLLIFLL) is removed in mature form.

Its subcellular location is the cell membrane. The polypeptide is PI-PLC X domain-containing protein At5g67130 (Arabidopsis thaliana (Mouse-ear cress)).